The sequence spans 249 residues: MFDPLLEKLHSSIRIQGGETAAVPDGLRECRNEKKNSLIRSWLWQVPGFRRWRVSRLDAGESLQVLNSVAYPNYNIDQPLMGLDLLWFGKRQKLVAILDFQPLIQDHSYLERHFQGLKALQNRFPELSGEETMRLFDPNQYFSPWLLFCRGGAEKATNSLPEAFNAFLHCYWELHQQNSKKASLIPAAEVKQLQIAYDIYSAERDPAHGLFTSHFGKAWSDRFLHEFLFPASTKADSSPPADADYDLPR.

This sequence belongs to the HY2 family.

It carries out the reaction 15,16-dihydrobiliverdin + oxidized 2[4Fe-4S]-[ferredoxin] = biliverdin IXalpha + reduced 2[4Fe-4S]-[ferredoxin] + 2 H(+). Functionally, catalyzes the two-electron reduction of biliverdin IX-alpha at the C15 methine bridge. This chain is 15,16-dihydrobiliverdin:ferredoxin oxidoreductase, found in Prochlorococcus marinus (strain MIT 9303).